A 335-amino-acid chain; its full sequence is Pregnancy-specific beta-1-glycoprotein 11 (335 aa).

A signal peptide spans 1-34 (MGPLSAPPCTEHIKWKGLLLTALLLNFWNLPTTA). Positions 35 to 144 (QVMIEAQPPK…TGYFTFTLYL (110 aa)) constitute an Ig-like V-type domain. N-linked (GlcNAc...) asparagine glycans are attached at residues N61, N104, and N111. Positions 127-129 (RGD) match the Cell attachment site motif. 2 Ig-like C2-type domains span residues 147-234 (PKPS…VTLN) and 242-317 (PRIF…TSLT). Intrachain disulfides connect C169–C217 and C261–C301.

Belongs to the immunoglobulin superfamily. CEA family.

The protein localises to the secreted. This chain is Pregnancy-specific beta-1-glycoprotein 11 (PSG11), found in Homo sapiens (Human).